Reading from the N-terminus, the 517-residue chain is Light-independent protochlorophyllide reductase subunit B (517 aa).

D36 is a [4Fe-4S] cluster binding site. Residue D285 is the Proton donor of the active site. 420-421 (GL) is a substrate binding site.

Belongs to the ChlB/BchB/BchZ family. In terms of assembly, protochlorophyllide reductase is composed of three subunits; BchL, BchN and BchB. Forms a heterotetramer of two BchB and two BchN subunits. [4Fe-4S] cluster is required as a cofactor.

It catalyses the reaction chlorophyllide a + oxidized 2[4Fe-4S]-[ferredoxin] + 2 ADP + 2 phosphate = protochlorophyllide a + reduced 2[4Fe-4S]-[ferredoxin] + 2 ATP + 2 H2O. It functions in the pathway porphyrin-containing compound metabolism; bacteriochlorophyll biosynthesis (light-independent). Component of the dark-operative protochlorophyllide reductase (DPOR) that uses Mg-ATP and reduced ferredoxin to reduce ring D of protochlorophyllide (Pchlide) to form chlorophyllide a (Chlide). This reaction is light-independent. The NB-protein (BchN-BchB) is the catalytic component of the complex. The polypeptide is Light-independent protochlorophyllide reductase subunit B (Bradyrhizobium sp. (strain BTAi1 / ATCC BAA-1182)).